We begin with the raw amino-acid sequence, 356 residues long: S-adenosylmethionine:tRNA ribosyltransferase-isomerase (356 aa).

The protein belongs to the QueA family. As to quaternary structure, monomer.

The protein localises to the cytoplasm. It carries out the reaction 7-aminomethyl-7-carbaguanosine(34) in tRNA + S-adenosyl-L-methionine = epoxyqueuosine(34) in tRNA + adenine + L-methionine + 2 H(+). It functions in the pathway tRNA modification; tRNA-queuosine biosynthesis. In terms of biological role, transfers and isomerizes the ribose moiety from AdoMet to the 7-aminomethyl group of 7-deazaguanine (preQ1-tRNA) to give epoxyqueuosine (oQ-tRNA). In Yersinia pseudotuberculosis serotype IB (strain PB1/+), this protein is S-adenosylmethionine:tRNA ribosyltransferase-isomerase.